The chain runs to 496 residues: Bifunctional protein HldE (496 aa).

The ribokinase stretch occupies residues 1-331 (MDPTPALAEI…AAVHQEEVSA (331 aa)). 206-209 (NRKE) lines the ATP pocket. Aspartate 276 is an active-site residue. Positions 358–496 (FTNGCFDLLH…GGSRRSGDTL (139 aa)) are cytidylyltransferase.

It in the N-terminal section; belongs to the carbohydrate kinase PfkB family. This sequence in the C-terminal section; belongs to the cytidylyltransferase family. As to quaternary structure, homodimer.

The catalysed reaction is D-glycero-beta-D-manno-heptose 7-phosphate + ATP = D-glycero-beta-D-manno-heptose 1,7-bisphosphate + ADP + H(+). It catalyses the reaction D-glycero-beta-D-manno-heptose 1-phosphate + ATP + H(+) = ADP-D-glycero-beta-D-manno-heptose + diphosphate. The protein operates within nucleotide-sugar biosynthesis; ADP-L-glycero-beta-D-manno-heptose biosynthesis; ADP-L-glycero-beta-D-manno-heptose from D-glycero-beta-D-manno-heptose 7-phosphate: step 1/4. Its pathway is nucleotide-sugar biosynthesis; ADP-L-glycero-beta-D-manno-heptose biosynthesis; ADP-L-glycero-beta-D-manno-heptose from D-glycero-beta-D-manno-heptose 7-phosphate: step 3/4. Its function is as follows. Catalyzes the phosphorylation of D-glycero-D-manno-heptose 7-phosphate at the C-1 position to selectively form D-glycero-beta-D-manno-heptose-1,7-bisphosphate. Catalyzes the ADP transfer from ATP to D-glycero-beta-D-manno-heptose 1-phosphate, yielding ADP-D-glycero-beta-D-manno-heptose. In Rhodospirillum rubrum (strain ATCC 11170 / ATH 1.1.1 / DSM 467 / LMG 4362 / NCIMB 8255 / S1), this protein is Bifunctional protein HldE.